The chain runs to 181 residues: Negative modulator of initiation of replication (181 aa).

3 interaction with DNA regions span residues 87–88 (AV), 116–120 (RTRVY), and 150–156 (NTNTGRK).

This sequence belongs to the SeqA family. Homodimer. Polymerizes to form helical filaments.

The protein resides in the cytoplasm. Functionally, negative regulator of replication initiation, which contributes to regulation of DNA replication and ensures that replication initiation occurs exactly once per chromosome per cell cycle. Binds to pairs of hemimethylated GATC sequences in the oriC region, thus preventing assembly of replication proteins and re-initiation at newly replicated origins. Repression is relieved when the region becomes fully methylated. The chain is Negative modulator of initiation of replication from Shigella flexneri.